A 125-amino-acid chain; its full sequence is Phosphoribosyl-AMP cyclohydrolase (125 aa).

Position 74 (Asp-74) interacts with Mg(2+). Cys-75 provides a ligand contact to Zn(2+). Residues Asp-76 and Asp-78 each contribute to the Mg(2+) site. The Zn(2+) site is built by Cys-92 and Cys-99.

Belongs to the PRA-CH family. In terms of assembly, homodimer. Mg(2+) serves as cofactor. Requires Zn(2+) as cofactor.

It is found in the cytoplasm. It catalyses the reaction 1-(5-phospho-beta-D-ribosyl)-5'-AMP + H2O = 1-(5-phospho-beta-D-ribosyl)-5-[(5-phospho-beta-D-ribosylamino)methylideneamino]imidazole-4-carboxamide. The protein operates within amino-acid biosynthesis; L-histidine biosynthesis; L-histidine from 5-phospho-alpha-D-ribose 1-diphosphate: step 3/9. Its function is as follows. Catalyzes the hydrolysis of the adenine ring of phosphoribosyl-AMP. In Trichlorobacter lovleyi (strain ATCC BAA-1151 / DSM 17278 / SZ) (Geobacter lovleyi), this protein is Phosphoribosyl-AMP cyclohydrolase.